The chain runs to 197 residues: Dephospho-CoA kinase (197 aa).

The DPCK domain maps to 2 to 197 (IIGLTGGIAS…GAIKDLANLV (196 aa)). 10 to 15 (ASGKST) is an ATP binding site.

The protein belongs to the CoaE family.

The protein localises to the cytoplasm. It catalyses the reaction 3'-dephospho-CoA + ATP = ADP + CoA + H(+). The protein operates within cofactor biosynthesis; coenzyme A biosynthesis; CoA from (R)-pantothenate: step 5/5. Functionally, catalyzes the phosphorylation of the 3'-hydroxyl group of dephosphocoenzyme A to form coenzyme A. The sequence is that of Dephospho-CoA kinase from Streptococcus thermophilus (strain CNRZ 1066).